Consider the following 537-residue polypeptide: Cytochrome P450 734A5 (537 aa).

The chain crosses the membrane as a helical span at residues 13-33; it reads GAAAVAVAAAAAWVAVYAAAA. Cys-480 lines the heme pocket.

It belongs to the cytochrome P450 family. It depends on heme as a cofactor. In terms of tissue distribution, exclusively expressed in roots.

Its subcellular location is the membrane. Functionally, cytochrome P450 probably involved in brassinosteroids (BRs) inactivation and regulation of BRs homeostasis. The chain is Cytochrome P450 734A5 (CYP734A5) from Oryza sativa subsp. japonica (Rice).